A 357-amino-acid polypeptide reads, in one-letter code: Queuosine-tRNA galactosyltransferase (357 aa).

It belongs to the glycosyltransferase 2 family.

It is found in the cytoplasm. The enzyme catalyses queuosine(34) in tRNA(Tyr) + UDP-alpha-D-galactose = O-5''-beta-D-galactosylqueuosine(34) in tRNA(Tyr) + UDP + H(+). Its function is as follows. Glycosyltransferase that specifically catalyzes galactosylation of cytoplasmic tRNA(Tyr) modified with queuosine at position 34 (queuosine(34)). Galactosylates the cyclopentene hydroxyl group of queuosine(34) in tRNA(Tyr) to form galactosyl-queuosine(34). Mannosylation of queuosine(34) in tRNA(Tyr) is required to slow-down elongation at cognate codons UAC and suppress stop codon readthrough, thereby regulating protein translation. The sequence is that of Queuosine-tRNA galactosyltransferase from Rattus norvegicus (Rat).